We begin with the raw amino-acid sequence, 299 residues long: Acetylglutamate kinase (299 aa).

Residues 72-73 (GG), Arg94, and Asn196 each bind substrate.

Belongs to the acetylglutamate kinase family. ArgB subfamily.

The protein localises to the cytoplasm. The enzyme catalyses N-acetyl-L-glutamate + ATP = N-acetyl-L-glutamyl 5-phosphate + ADP. The protein operates within amino-acid biosynthesis; L-arginine biosynthesis; N(2)-acetyl-L-ornithine from L-glutamate: step 2/4. Its function is as follows. Catalyzes the ATP-dependent phosphorylation of N-acetyl-L-glutamate. The protein is Acetylglutamate kinase of Burkholderia ambifaria (strain MC40-6).